Here is a 67-residue protein sequence, read N- to C-terminus: Large ribosomal subunit protein uL29 (67 aa).

Belongs to the universal ribosomal protein uL29 family.

The chain is Large ribosomal subunit protein uL29 from Acetivibrio thermocellus (strain ATCC 27405 / DSM 1237 / JCM 9322 / NBRC 103400 / NCIMB 10682 / NRRL B-4536 / VPI 7372) (Clostridium thermocellum).